A 2430-amino-acid chain; its full sequence is DNA-directed RNA polymerase subunit beta'' (2430 aa).

C336, C455, C462, and C465 together coordinate Zn(2+).

Belongs to the RNA polymerase beta' chain family. RpoC2 subfamily. As to quaternary structure, in plastids the minimal PEP RNA polymerase catalytic core is composed of four subunits: alpha, beta, beta', and beta''. When a (nuclear-encoded) sigma factor is associated with the core the holoenzyme is formed, which can initiate transcription. Zn(2+) serves as cofactor.

The protein resides in the plastid. It localises to the chloroplast. It catalyses the reaction RNA(n) + a ribonucleoside 5'-triphosphate = RNA(n+1) + diphosphate. Its function is as follows. DNA-dependent RNA polymerase catalyzes the transcription of DNA into RNA using the four ribonucleoside triphosphates as substrates. The sequence is that of DNA-directed RNA polymerase subunit beta'' from Stigeoclonium helveticum (Green alga).